Here is a 355-residue protein sequence, read N- to C-terminus: Putative beta-lactamase HcpE (355 aa).

Residues 1 to 22 form the signal peptide; the sequence is MGVKFLKILVCGLFFWSLNAHL. TPR repeat units lie at residues 27–60, 63–96, 98–131, 132–166, 202–240, 245–275, 276–311, and 312–344; these read DNSF…GVSE, TQLG…DDRE, CFGL…LKHP, ESCY…DMAK, GQAC…NNSG, LGSM…MGSA, VSCS…MGDE, and VGCF…GMKQ. Disulfide bonds link Cys54–Cys62, Cys90–Cys98, Cys126–Cys134, Cys160–Cys168, Cys197–Cys205, Cys234–Cys242, Cys270–Cys278, Cys306–Cys314, and Cys338–Cys346.

Belongs to the hcp beta-lactamase family.

The protein resides in the secreted. It carries out the reaction a beta-lactam + H2O = a substituted beta-amino acid. Its function is as follows. May hydrolyze 6-aminopenicillinic acid and 7-aminocephalosporanic acid (ACA) derivatives. In Helicobacter pylori (strain ATCC 700392 / 26695) (Campylobacter pylori), this protein is Putative beta-lactamase HcpE (hcpE).